A 124-amino-acid polypeptide reads, in one-letter code: Large ribosomal subunit protein uL18 (124 aa).

The protein belongs to the universal ribosomal protein uL18 family. Part of the 50S ribosomal subunit; part of the 5S rRNA/L5/L18/L25 subcomplex. Contacts the 5S and 23S rRNAs.

Functionally, this is one of the proteins that bind and probably mediate the attachment of the 5S RNA into the large ribosomal subunit, where it forms part of the central protuberance. In Koribacter versatilis (strain Ellin345), this protein is Large ribosomal subunit protein uL18.